The sequence spans 574 residues: Phenylalanine--tRNA ligase beta subunit (574 aa).

The B5 domain occupies 278 to 353 (LTPKEFEVEL…IAYGYNEIEP (76 aa)). The Mg(2+) site is built by D331, D337, E340, and D341.

This sequence belongs to the phenylalanyl-tRNA synthetase beta subunit family. Type 2 subfamily. As to quaternary structure, tetramer of two alpha and two beta subunits. It depends on Mg(2+) as a cofactor.

It is found in the cytoplasm. It catalyses the reaction tRNA(Phe) + L-phenylalanine + ATP = L-phenylalanyl-tRNA(Phe) + AMP + diphosphate + H(+). This is Phenylalanine--tRNA ligase beta subunit from Thermococcus kodakarensis (strain ATCC BAA-918 / JCM 12380 / KOD1) (Pyrococcus kodakaraensis (strain KOD1)).